A 100-amino-acid chain; its full sequence is MRSFLYGVLAFAVLARSSAVAAFPIPDESRPLSKTSPDTVAPRSLRIEAQEVIQSGRGDGYGGFWKNVAQSTNKIVKRPDIKIGKLIEAAKKAKAKMTKS.

The first 22 residues, 1-22, serve as a signal peptide directing secretion; that stretch reads MRSFLYGVLAFAVLARSSAVAA. Residues 43 to 57 carry the RxLR-dEER motif; that stretch reads RSLRIEAQEVIQSGR. Positions 78–82 match the Calmodulin-binding motif motif; the sequence is RPDIK.

This sequence belongs to the RxLR effector family. In terms of assembly, interacts with the host papain-like cysteine protease C14. Interacts with the host calmodulin.

It is found in the secreted. The protein localises to the host cell membrane. Functionally, secreted effector that acts as an elicitor of hypersensitive response (HR) specifically on plants carrying defense protein Rpi-blb2. Enhances P.infestans colonization of Nicotiana benthamiana leaves. Interacts with, and subsequently prevents secretion into the apoplast of the host papain-like cysteine protease C14, thus promoting virulence by interfering with the execution of host defenses. Associates with calmodulin at the host plasma membrane to interfere with plant defense-associated calcium signaling in hosts. This Phytophthora infestans (strain T30-4) (Potato late blight agent) protein is RxLR effector protein Avrblb2.